The following is a 589-amino-acid chain: Proline--tRNA ligase (589 aa).

This sequence belongs to the class-II aminoacyl-tRNA synthetase family. ProS type 1 subfamily. As to quaternary structure, homodimer.

The protein localises to the cytoplasm. The enzyme catalyses tRNA(Pro) + L-proline + ATP = L-prolyl-tRNA(Pro) + AMP + diphosphate. Its function is as follows. Catalyzes the attachment of proline to tRNA(Pro) in a two-step reaction: proline is first activated by ATP to form Pro-AMP and then transferred to the acceptor end of tRNA(Pro). As ProRS can inadvertently accommodate and process non-cognate amino acids such as alanine and cysteine, to avoid such errors it has two additional distinct editing activities against alanine. One activity is designated as 'pretransfer' editing and involves the tRNA(Pro)-independent hydrolysis of activated Ala-AMP. The other activity is designated 'posttransfer' editing and involves deacylation of mischarged Ala-tRNA(Pro). The misacylated Cys-tRNA(Pro) is not edited by ProRS. This Nocardioides sp. (strain ATCC BAA-499 / JS614) protein is Proline--tRNA ligase.